The sequence spans 465 residues: Cruciferin CRU4 (465 aa).

An N-terminal signal peptide occupies residues 1-22; it reads MGPTSLLSFFFTFLTLFHGFTA. 2 disulfide bridges follow: Cys29–Cys62 and Cys105–Cys283. Cupin type-1 domains lie at 34 to 236 and 289 to 438; these read LNAL…ETAQ and ENLD…QEAR. A Phosphothreonine modification is found at Thr108. The tract at residues 112–135 is disordered; the sequence is SPVFGQGQGQEQGQGQGQGQGQGF. Over residues 117–133 the composition is skewed to gly residues; that stretch reads QGQGQEQGQGQGQGQGQ. Tyr306 is modified (phosphotyrosine). 2 positions are modified to phosphoserine: Ser308 and Ser443.

This sequence belongs to the 11S seed storage protein (globulins) family. As to quaternary structure, heterohexamer; each subunit is composed of an acidic and a basic chain derived from a single precursor and linked by a disulfide bond.

It is found in the rough endoplasmic reticulum. Functionally, this is a seed storage protein. This Brassica napus (Rape) protein is Cruciferin CRU4 (CRU4).